The chain runs to 404 residues: Argininosuccinate synthase (404 aa).

Residues 10-18 (AYSGGVDTS) and Ala-38 each bind ATP. Tyr-89 contributes to the L-citrulline binding site. Gly-119 contributes to the ATP binding site. Thr-121, Asn-125, and Asp-126 together coordinate L-aspartate. L-citrulline is bound at residue Asn-125. 5 residues coordinate L-citrulline: Arg-129, Ser-177, Ser-186, Glu-262, and Tyr-274.

The protein belongs to the argininosuccinate synthase family. Type 1 subfamily. As to quaternary structure, homotetramer.

The protein localises to the cytoplasm. It carries out the reaction L-citrulline + L-aspartate + ATP = 2-(N(omega)-L-arginino)succinate + AMP + diphosphate + H(+). It participates in amino-acid biosynthesis; L-arginine biosynthesis; L-arginine from L-ornithine and carbamoyl phosphate: step 2/3. This is Argininosuccinate synthase from Prochlorococcus marinus (strain MIT 9215).